Here is a 607-residue protein sequence, read N- to C-terminus: Dopamine receptor 3 (607 aa).

The Extracellular portion of the chain corresponds to 1–23; that stretch reads MLAGQHHVTDIESPLMVVLWRVA. The helical transmembrane segment at 24–44 threads the bilayer; sequence AGVFLPLVPTMAVFGNVLVIM. At 45–58 the chain is on the cytoplasmic side; the sequence is SVFRERSLQTVTNM. A helical transmembrane segment spans residues 59-79; the sequence is LIVSLAVSDFMVAIGVMSFGV. Over 80 to 96 the chain is Extracellular; the sequence is YYEWNDFKWGLGSFFCH. Cys-95 and Cys-173 are joined by a disulfide. The chain crosses the membrane as a helical span at residues 97 to 117; sequence VYQALDVACSTASILNLLAIS. Residues 118-141 lie on the Cytoplasmic side of the membrane; it reads LDRYIAIGHPISYAQYGARGGRAM. The helical transmembrane segment at 142–162 threads the bilayer; that stretch reads ISITIVWGVSVAVALPLLLGV. At 163–182 the chain is on the extracellular side; that stretch reads NPMEENDLQECELANPYFNM. The chain crosses the membrane as a helical span at residues 183–203; it reads ISSIFSFFIPCIAMIILYTII. The Cytoplasmic segment spans residues 204 to 523; the sequence is FRRLRQRERA…TKQMRREHKA (320 aa). Positions 402-435 are disordered; the sequence is VPSIQDEKKLSQKSNDLPFSHQNGTHKQKLLPNP. Over residues 413 to 424 the composition is skewed to polar residues; sequence QKSNDLPFSHQN. Residues 524–544 form a helical membrane-spanning segment; the sequence is TVTLAVVLAVFLFCWLPFFVL. Topologically, residues 545-558 are extracellular; it reads HLSNSICLIIDENS. The helical transmembrane segment at 559–579 threads the bilayer; the sequence is ACVGFLPLYLATWLGYLNSSL. Topologically, residues 580–607 are cytoplasmic; that stretch reads NPLIYTVFDQRFRNAFRNILSCGIFKKR.

The protein belongs to the G-protein coupled receptor 1 family. Expressed in the neurons of the head, ventral cord and tail with weak expression observed in body wall muscles and PVD neurons. In the ventral cord, expressed strongly in GABAergic neurons with weaker expression in cholinergic motor neurons. Expressed in cholinergic SIA neurons and octopaminergic RIC neurons. In males, expressed in the dorsal and ventral spicule protractor and retractor muscles, and the sensory post-cloacal sensilla B (PCB) neuron. Expressed in the head acetylcholine neurons. Expressed in the AVA, AVB, AVD and AVE command interneurons. Expressed in premotor interneurons.

The protein localises to the cell membrane. Functionally, G-protein coupled receptor which binds to the neurotransmitter dopamine with high affinity leading to the activation of an associated G-protein and downstream signaling pathways. Couples to G-proteins to inhibit adenylate cyclase (AC) activity and cAMP production. Antagonizes the D1-like dopamine receptor dop-1 to negatively regulate the rate of locomotion. Negatively regulates locomotion through the activation of goa-1 subunit proteins which inactivates the unc-77/nca-1 and nca-2 ion-channels in the command interneurons. Inhibits early-stage swimming by modulating the unc-77/nca-1 and nca-2 ion channels of premotor interneurons. In GABAergic, RIC, and SIA neurons, antagonizes the function of dop-1 to play a role in behavioral plasticity and regulate the decision-making process when conflicting alternatives are present. Antagonizes octopamine signaling in response to food by promoting the dopamine-mediated suppression of crh-1/CREB1 transcription factor activation in cholinergic SIA neurons. This is most likely in association with the G(o)-alpha G-protein subunit goa-1. Promotes male mating behavior by antagonizing acetylcholine signaling to control the protrusion of copulatory spicules from the tail of males during hermaphrodite vulval location. Under mitochondria stress, plays a role in bacterial preference, resulting in learned avoidance behavior. The polypeptide is Dopamine receptor 3 (Caenorhabditis elegans).